Reading from the N-terminus, the 416-residue chain is MIFTLGINHHSAPLAIRERVAFGADKLPHALADLTRERPVREVAILSTCNRTEIYCSAESPDVVIDWLAHYHQVGREEIAPYIYTHDQPEAIRHAFRVASGLDSMVIGEPQILGQMKDAVRAAEENGTLGTQLHKLFQRSFSVAKEVRSTTAIGANIVSMAAAGVHLAERIFESIAGQRILFIGAGEMIELCAAHFCAGKPKQVTIANRTLERGRALAEQYGGTAIRLDELGEHLAQHDIVVSCTASPLPIIGLGMVERAIKTRRHRPIFMVDLAVPRDIEEEVGELDDVFLYTVDDLAQVVESGLESRQAAVVEAEDIIANRVKDFLGWLESRDTVPVIRSLRDSAERMRRHEIEHAMKLLAKGEAPEKVLEHLSHRLTNKFLHAPTQTLNSAEGGERADLQGAAARLFHLHAAD.

Residues Thr-48–Arg-51, Ser-104, Glu-109–Gln-111, and Gln-115 each bind substrate. Catalysis depends on Cys-49, which acts as the Nucleophile. Gly-184 to Ile-189 contacts NADP(+).

It belongs to the glutamyl-tRNA reductase family. Homodimer.

The enzyme catalyses (S)-4-amino-5-oxopentanoate + tRNA(Glu) + NADP(+) = L-glutamyl-tRNA(Glu) + NADPH + H(+). It functions in the pathway porphyrin-containing compound metabolism; protoporphyrin-IX biosynthesis; 5-aminolevulinate from L-glutamyl-tRNA(Glu): step 1/2. Catalyzes the NADPH-dependent reduction of glutamyl-tRNA(Glu) to glutamate 1-semialdehyde (GSA). This chain is Glutamyl-tRNA reductase, found in Dechloromonas aromatica (strain RCB).